We begin with the raw amino-acid sequence, 475 residues long: Sulfate adenylyltransferase subunit 1 (475 aa).

In terms of domain architecture, tr-type G spans 25–239 (KSLLRFLTCG…EVLETVEIQR (215 aa)). The tract at residues 34-41 (GSVDDGKS) is G1. 34–41 (GSVDDGKS) provides a ligand contact to GTP. Residues 92–96 (GITID) form a G2 region. A G3 region spans residues 113-116 (DTPG). GTP contacts are provided by residues 113–117 (DTPGH) and 168–171 (NKMD). Positions 168 to 171 (NKMD) are G4. The interval 206 to 208 (SAL) is G5.

This sequence belongs to the TRAFAC class translation factor GTPase superfamily. Classic translation factor GTPase family. CysN/NodQ subfamily. As to quaternary structure, heterodimer composed of CysD, the smaller subunit, and CysN.

The catalysed reaction is sulfate + ATP + H(+) = adenosine 5'-phosphosulfate + diphosphate. It functions in the pathway sulfur metabolism; hydrogen sulfide biosynthesis; sulfite from sulfate: step 1/3. With CysD forms the ATP sulfurylase (ATPS) that catalyzes the adenylation of sulfate producing adenosine 5'-phosphosulfate (APS) and diphosphate, the first enzymatic step in sulfur assimilation pathway. APS synthesis involves the formation of a high-energy phosphoric-sulfuric acid anhydride bond driven by GTP hydrolysis by CysN coupled to ATP hydrolysis by CysD. The chain is Sulfate adenylyltransferase subunit 1 from Shigella flexneri serotype 5b (strain 8401).